We begin with the raw amino-acid sequence, 426 residues long: 3-phosphoshikimate 1-carboxyvinyltransferase (426 aa).

Residues K22, S23, and R27 each coordinate 3-phosphoshikimate. K22 is a binding site for phosphoenolpyruvate. Residues G96 and R124 each coordinate phosphoenolpyruvate. Residues S170, S171, Q172, S198, D314, N337, and K341 each coordinate 3-phosphoshikimate. Phosphoenolpyruvate is bound at residue Q172. D314 acts as the Proton acceptor in catalysis. Phosphoenolpyruvate is bound by residues R345, R387, and K412.

This sequence belongs to the EPSP synthase family. Monomer.

Its subcellular location is the cytoplasm. The catalysed reaction is 3-phosphoshikimate + phosphoenolpyruvate = 5-O-(1-carboxyvinyl)-3-phosphoshikimate + phosphate. Its pathway is metabolic intermediate biosynthesis; chorismate biosynthesis; chorismate from D-erythrose 4-phosphate and phosphoenolpyruvate: step 6/7. Its function is as follows. Catalyzes the transfer of the enolpyruvyl moiety of phosphoenolpyruvate (PEP) to the 5-hydroxyl of shikimate-3-phosphate (S3P) to produce enolpyruvyl shikimate-3-phosphate and inorganic phosphate. This is 3-phosphoshikimate 1-carboxyvinyltransferase from Vibrio atlanticus (strain LGP32) (Vibrio splendidus (strain Mel32)).